The sequence spans 77 residues: UPF0401 protein c3666 (77 aa).

The protein belongs to the UPF0401 family.

In Escherichia coli O6:H1 (strain CFT073 / ATCC 700928 / UPEC), this protein is UPF0401 protein c3666.